We begin with the raw amino-acid sequence, 201 residues long: Large ribosomal subunit protein uL4 (201 aa).

Residues 44–71 form a disordered region; that stretch reads RAQKTRAEVTGSGKKPWRQKGTGRARSG.

The protein belongs to the universal ribosomal protein uL4 family. Part of the 50S ribosomal subunit.

One of the primary rRNA binding proteins, this protein initially binds near the 5'-end of the 23S rRNA. It is important during the early stages of 50S assembly. It makes multiple contacts with different domains of the 23S rRNA in the assembled 50S subunit and ribosome. Its function is as follows. Forms part of the polypeptide exit tunnel. This is Large ribosomal subunit protein uL4 from Shigella flexneri serotype 5b (strain 8401).